The primary structure comprises 208 residues: FMN-dependent NADH:quinone oxidoreductase (208 aa).

Residues Ser9 and 15–17 contribute to the FMN site; that span reads SHS.

It belongs to the azoreductase type 1 family. Homodimer. FMN is required as a cofactor.

It catalyses the reaction 2 a quinone + NADH + H(+) = 2 a 1,4-benzosemiquinone + NAD(+). It carries out the reaction N,N-dimethyl-1,4-phenylenediamine + anthranilate + 2 NAD(+) = 2-(4-dimethylaminophenyl)diazenylbenzoate + 2 NADH + 2 H(+). Functionally, quinone reductase that provides resistance to thiol-specific stress caused by electrophilic quinones. Its function is as follows. Also exhibits azoreductase activity. Catalyzes the reductive cleavage of the azo bond in aromatic azo compounds to the corresponding amines. This chain is FMN-dependent NADH:quinone oxidoreductase, found in Bordetella petrii (strain ATCC BAA-461 / DSM 12804 / CCUG 43448).